The sequence spans 436 residues: Enolase (436 aa).

Residue Gln167 coordinates (2R)-2-phosphoglycerate. Glu209 acts as the Proton donor in catalysis. Mg(2+) contacts are provided by Asp246, Glu291, and Asp318. (2R)-2-phosphoglycerate-binding residues include Lys343, Arg372, Ser373, and Lys394. The active-site Proton acceptor is the Lys343.

It belongs to the enolase family. As to quaternary structure, component of the RNA degradosome, a multiprotein complex involved in RNA processing and mRNA degradation. Mg(2+) serves as cofactor.

It is found in the cytoplasm. Its subcellular location is the secreted. The protein resides in the cell surface. It carries out the reaction (2R)-2-phosphoglycerate = phosphoenolpyruvate + H2O. Its pathway is carbohydrate degradation; glycolysis; pyruvate from D-glyceraldehyde 3-phosphate: step 4/5. Its function is as follows. Catalyzes the reversible conversion of 2-phosphoglycerate (2-PG) into phosphoenolpyruvate (PEP). It is essential for the degradation of carbohydrates via glycolysis. The chain is Enolase from Haemophilus influenzae (strain 86-028NP).